Reading from the N-terminus, the 151-residue chain is Ribosome maturation factor RimP (151 aa).

Belongs to the RimP family.

It localises to the cytoplasm. In terms of biological role, required for maturation of 30S ribosomal subunits. This chain is Ribosome maturation factor RimP, found in Desulfotalea psychrophila (strain LSv54 / DSM 12343).